A 411-amino-acid chain; its full sequence is Envelope glycoprotein G (411 aa).

Residues 1 to 19 (MLTVLAALSLLSLLTSATG) form the signal peptide. 5 N-linked (GlcNAc...) asparagine; by host glycosylation sites follow: Asn-83, Asn-138, Asn-222, Asn-245, and Asn-317. Composition is skewed to polar residues over residues 306 to 327 (VPSS…SNSP) and 334 to 345 (SVNSDDSTHTGG). Residues 306–345 (VPSSAAESSLENQSTQEESNSPEVAHLRSVNSDDSTHTGG) are disordered. Residues 363-379 (CLALIGLGTCAMIGLIV) form a helical membrane-spanning segment. The N-linked (GlcNAc...) asparagine; by host glycan is linked to Asn-392.

Belongs to the alphaherpesvirinae glycoprotein G family.

It localises to the virion membrane. In terms of biological role, chemokine-binding protein that inhibits neutrophils' chemotaxis. The chain is Envelope glycoprotein G (gG) from Equus caballus (Horse).